The primary structure comprises 225 residues: Cytidylate kinase (225 aa).

12 to 20 lines the ATP pocket; it reads GPSGAGKGT.

It belongs to the cytidylate kinase family. Type 1 subfamily.

The protein localises to the cytoplasm. It carries out the reaction CMP + ATP = CDP + ADP. The catalysed reaction is dCMP + ATP = dCDP + ADP. This chain is Cytidylate kinase, found in Pectobacterium carotovorum subsp. carotovorum (strain PC1).